The chain runs to 370 residues: MLDDFKIDLLVKNKPPTSTTAVVAMSGGVDSSVAAALLHKLGYKVIGITLQLYNNNKNSNTKGACCGSLDTKDAKQVASSMGFPHYTLNYEKVFREEVIEDFIDTYTQGKTPIPCIKCNQVIKFRDLLNATKSLGADVLVTGHYIRKIEQDDDIYVYSSKDTKKDQSYFLFATTVEQLRLLRFPLGNFHKEDIRKLAKYFNLQVANKPDSQNICFVTDTYKKTIAELRPHTIKKGNIIDINGNILSQHNGIVNFTIGQRKGIGISSKAPLYVIKLNPDTNEVTVGPKSALLQNKLYIREINWLAKEKIPHNGLNVKVKLRSSHSGSPATIFPNNNNTATILLQDSYCTVTPGQACVIYDHDRMLGGGWIC.

ATP contacts are provided by residues 24–31 (AMSGGVDS) and Leu50. Cys118 acts as the Nucleophile in catalysis. Cys118 and Cys214 are disulfide-bonded. Gly142 lines the ATP pocket. An interaction with tRNA region spans residues 164–166 (KDQ). The active-site Cysteine persulfide intermediate is Cys214.

It belongs to the MnmA/TRMU family.

The protein resides in the cytoplasm. It carries out the reaction S-sulfanyl-L-cysteinyl-[protein] + uridine(34) in tRNA + AH2 + ATP = 2-thiouridine(34) in tRNA + L-cysteinyl-[protein] + A + AMP + diphosphate + H(+). In terms of biological role, catalyzes the 2-thiolation of uridine at the wobble position (U34) of tRNA, leading to the formation of s(2)U34. This chain is tRNA-specific 2-thiouridylase MnmA, found in Ehrlichia ruminantium (strain Gardel).